The primary structure comprises 329 residues: 2,3,4,5-tetrahydropyridine-2,6-dicarboxylate N-succinyltransferase (329 aa).

2 residues coordinate Mg(2+): D177 and E194. E210 acts as the Acyl-anhydride intermediate in catalysis. Succinyl-CoA contacts are provided by residues R212, G227, S230, A253, 268 to 269 (EA), G276, K288, and 301 to 304 (RRNS).

The protein belongs to the type 2 tetrahydrodipicolinate N-succinyltransferase family. As to quaternary structure, homotrimer.

Its subcellular location is the cytoplasm. It carries out the reaction (S)-2,3,4,5-tetrahydrodipicolinate + succinyl-CoA + H2O = (S)-2-succinylamino-6-oxoheptanedioate + CoA. It functions in the pathway amino-acid biosynthesis; L-lysine biosynthesis via DAP pathway; LL-2,6-diaminopimelate from (S)-tetrahydrodipicolinate (succinylase route): step 1/3. Functionally, catalyzes the conversion of the cyclic tetrahydrodipicolinate (THDP) into the acyclic N-succinyl-L-2-amino-6-oxopimelate using succinyl-CoA. The chain is 2,3,4,5-tetrahydropyridine-2,6-dicarboxylate N-succinyltransferase from Streptomyces coelicolor (strain ATCC BAA-471 / A3(2) / M145).